A 216-amino-acid polypeptide reads, in one-letter code: Large ribosomal subunit protein uL24m (216 aa).

The transit peptide at 1–9 (MRLTLLLEM) directs the protein to the mitochondrion. Residues 56 to 89 (YFRGDTVEVLHGKDAGKQGKVTQVVRARNWVVVD) enclose the KOW domain.

This sequence belongs to the universal ribosomal protein uL24 family. As to quaternary structure, component of the mitochondrial ribosome large subunit (39S) which comprises a 16S rRNA and about 50 distinct proteins. In terms of tissue distribution, ubiquitous. Expressed at greater levels in the kidney, adipose tissue, muscle and liver than the brain, heart, ovary and lung.

The protein localises to the mitochondrion. This is Large ribosomal subunit protein uL24m (mrpl24) from Xenopus laevis (African clawed frog).